A 215-amino-acid chain; its full sequence is Outer membrane protein assembly factor BamC homolog (215 aa).

The first 16 residues, 1-16 (MKKIILNLVTAIILAG), serve as a signal peptide directing secretion. Cysteine 17 carries N-palmitoyl cysteine lipidation. Residue cysteine 17 is the site of S-diacylglycerol cysteine attachment.

The protein belongs to the BamC family.

Its subcellular location is the cell outer membrane. This chain is Outer membrane protein assembly factor BamC homolog, found in Haemophilus influenzae (strain ATCC 51907 / DSM 11121 / KW20 / Rd).